A 680-amino-acid chain; its full sequence is WD repeat-containing protein 48 homolog (680 aa).

8 WD repeats span residues 26–65 (QHRN…SEKY), 71–110 (HHND…CMST), 113–152 (THRD…ALTA), 164–203 (GSKD…RSMK), 206–245 (GHTE…CVQT), 248–287 (VHKE…NKTL), 290–329 (EEKA…RGTL), and 350–389 (KGGA…KKDT). The disordered stretch occupies residues 594-618 (TPSGANANNSLQNSQSDGNSEGSQL). Positions 596 to 609 (SGANANNSLQNSQS) are enriched in low complexity.

Belongs to the WD repeat WDR48 family. Catalytic component of the Usp12-46 deubiquitylase complex consisting of Usp12-46, Wdr20 and Uaf1; regulatory subunit that, together wtih Wdr20, stabilizes Usp12-46. The Usp12-46 deubiquitylase complex associates with arr/arrow; the interaction leads to deubiquitination and stabilization of arr/arrow.

Its function is as follows. Regulatory component of the Usp12-46 deubiquitylase complex. activates deubiquitination by increasing the catalytic turnover without increasing the affinity of deubiquitinating enzymes for the substrate. The complex deubiquitylates the wg/wingless-signaling receptor arr/arrow, which stabilizes the receptor and increases its concentration at the cell surface; this enhances the sensitivity of cells to wg/wingless-signal stimulation. This increases the amplitude and spatial range of the signaling response to the wg/wingless morphogen gradient, facilitating the precise concentration-dependent regulation of its target genes. Together with Wdr20 and Usp12-46 required for wg/wingless-mediated signaling in the wing imaginal disc and for wg/wingless-dependent regulation of intestinal stem cell proliferation. The polypeptide is WD repeat-containing protein 48 homolog (Drosophila persimilis (Fruit fly)).